Consider the following 431-residue polypeptide: UDP-N-acetylglucosamine 1-carboxyvinyltransferase (431 aa).

22–23 (KN) is a phosphoenolpyruvate binding site. Arg92 provides a ligand contact to UDP-N-acetyl-alpha-D-glucosamine. Asp116 serves as the catalytic Proton donor. UDP-N-acetyl-alpha-D-glucosamine is bound by residues 121-125 (RPIDQ), Asp307, and Ile330.

The protein belongs to the EPSP synthase family. MurA subfamily.

It localises to the cytoplasm. It catalyses the reaction phosphoenolpyruvate + UDP-N-acetyl-alpha-D-glucosamine = UDP-N-acetyl-3-O-(1-carboxyvinyl)-alpha-D-glucosamine + phosphate. It participates in cell wall biogenesis; peptidoglycan biosynthesis. In terms of biological role, cell wall formation. Adds enolpyruvyl to UDP-N-acetylglucosamine. The protein is UDP-N-acetylglucosamine 1-carboxyvinyltransferase of Lactobacillus acidophilus (strain ATCC 700396 / NCK56 / N2 / NCFM).